A 356-amino-acid chain; its full sequence is Homoserine O-succinyltransferase (356 aa).

Catalysis depends on Cys146, which acts as the Acyl-thioester intermediate. Residues Lys167 and Ser196 each coordinate substrate. The Proton acceptor role is filled by His239. The active site involves Glu241. Arg253 lines the substrate pocket.

The protein belongs to the MetA family.

It is found in the cytoplasm. The catalysed reaction is L-homoserine + succinyl-CoA = O-succinyl-L-homoserine + CoA. It participates in amino-acid biosynthesis; L-methionine biosynthesis via de novo pathway; O-succinyl-L-homoserine from L-homoserine: step 1/1. Its function is as follows. Transfers a succinyl group from succinyl-CoA to L-homoserine, forming succinyl-L-homoserine. In Thioalkalivibrio nitratireducens (strain DSM 14787 / UNIQEM 213 / ALEN2), this protein is Homoserine O-succinyltransferase.